The chain runs to 100 residues: Small ribosomal subunit protein uS14c (100 aa).

Belongs to the universal ribosomal protein uS14 family. Part of the 30S ribosomal subunit.

The protein resides in the plastid. It is found in the chloroplast. Functionally, binds 16S rRNA, required for the assembly of 30S particles. The polypeptide is Small ribosomal subunit protein uS14c (Nymphaea alba (White water-lily)).